Here is a 235-residue protein sequence, read N- to C-terminus: Large ribosomal subunit protein uL1 (235 aa).

It belongs to the universal ribosomal protein uL1 family. In terms of assembly, part of the 50S ribosomal subunit.

Functionally, binds directly to 23S rRNA. The L1 stalk is quite mobile in the ribosome, and is involved in E site tRNA release. Protein L1 is also a translational repressor protein, it controls the translation of the L11 operon by binding to its mRNA. This Prochlorococcus marinus subsp. pastoris (strain CCMP1986 / NIES-2087 / MED4) protein is Large ribosomal subunit protein uL1.